The sequence spans 73 residues: MKFTVRVKPNSKKIFFRKEEDGSVTIAVREPALEGKANEAVIETISREMKIPKRKIRIVSGEKGKKKTIEIDP.

This sequence belongs to the UPF0235 family.

This is UPF0235 protein LBL_1291 from Leptospira borgpetersenii serovar Hardjo-bovis (strain L550).